The primary structure comprises 508 residues: Ras association domain-containing protein 10 (508 aa).

The 133-residue stretch at 1-133 folds into the Ras-associating domain; it reads MDPSEKKISV…VRFVLVRSEA (133 aa). 2 disordered regions span residues 51-81 and 186-221; these read RRGL…AMPP and KLNR…ESAS. Residues 66–78 are compositionally biased toward acidic residues; the sequence is EPPDENDEDDDDA. Residues 195–214 are compositionally biased toward low complexity; the sequence is PSSPCSSTSSSTASSCSSSA. Coiled coils occupy residues 235–266 and 319–358; these read QDHT…DRMR and LEEL…NQRW. Positions 473 to 508 are disordered; the sequence is GLAKSCPGNDEDSDTGLSSMHSQDSDSVPPVCESLV. The segment covering 487-498 has biased composition (polar residues); that stretch reads TGLSSMHSQDSD.

As to expression, expressed in neural progenitor cells (at protein level).

The protein resides in the cytoplasm. It localises to the cytosol. Its subcellular location is the cytoskeleton. The protein localises to the microtubule organizing center. It is found in the centrosome. The protein resides in the spindle pole. Plays an important role in regulating embryonic neurogenesis. This is Ras association domain-containing protein 10 (Rassf10) from Mus musculus (Mouse).